Reading from the N-terminus, the 197-residue chain is Elongation factor Ts (197 aa).

An involved in Mg(2+) ion dislocation from EF-Tu region spans residues Thr-81 to Val-84.

The protein belongs to the EF-Ts family.

Its subcellular location is the cytoplasm. Associates with the EF-Tu.GDP complex and induces the exchange of GDP to GTP. It remains bound to the aminoacyl-tRNA.EF-Tu.GTP complex up to the GTP hydrolysis stage on the ribosome. This Sulfurihydrogenibium sp. (strain YO3AOP1) protein is Elongation factor Ts.